Consider the following 640-residue polypeptide: 1-deoxy-D-xylulose-5-phosphate synthase (640 aa).

Thiamine diphosphate is bound by residues His79 and 120–122 (GHS). Asp151 contacts Mg(2+). Residues 152 to 153 (GG), Asn180, Tyr288, and Glu372 contribute to the thiamine diphosphate site. Asn180 provides a ligand contact to Mg(2+).

Belongs to the transketolase family. DXPS subfamily. In terms of assembly, homodimer. Mg(2+) is required as a cofactor. Requires thiamine diphosphate as cofactor.

The catalysed reaction is D-glyceraldehyde 3-phosphate + pyruvate + H(+) = 1-deoxy-D-xylulose 5-phosphate + CO2. It functions in the pathway metabolic intermediate biosynthesis; 1-deoxy-D-xylulose 5-phosphate biosynthesis; 1-deoxy-D-xylulose 5-phosphate from D-glyceraldehyde 3-phosphate and pyruvate: step 1/1. Functionally, catalyzes the acyloin condensation reaction between C atoms 2 and 3 of pyruvate and glyceraldehyde 3-phosphate to yield 1-deoxy-D-xylulose-5-phosphate (DXP). The sequence is that of 1-deoxy-D-xylulose-5-phosphate synthase from Nitrosococcus oceani (strain ATCC 19707 / BCRC 17464 / JCM 30415 / NCIMB 11848 / C-107).